Consider the following 362-residue polypeptide: Uroporphyrinogen decarboxylase (362 aa).

Substrate contacts are provided by residues arginine 39–arginine 43, aspartate 88, tyrosine 165, threonine 220, and histidine 334.

The protein belongs to the uroporphyrinogen decarboxylase family. Homodimer.

Its subcellular location is the cytoplasm. The catalysed reaction is uroporphyrinogen III + 4 H(+) = coproporphyrinogen III + 4 CO2. It functions in the pathway porphyrin-containing compound metabolism; protoporphyrin-IX biosynthesis; coproporphyrinogen-III from 5-aminolevulinate: step 4/4. In terms of biological role, catalyzes the decarboxylation of four acetate groups of uroporphyrinogen-III to yield coproporphyrinogen-III. This is Uroporphyrinogen decarboxylase from Synechococcus sp. (strain JA-3-3Ab) (Cyanobacteria bacterium Yellowstone A-Prime).